A 210-amino-acid chain; its full sequence is Thymidylate kinase (210 aa).

Gly-10 to Ser-17 is a binding site for ATP.

It belongs to the thymidylate kinase family.

The enzyme catalyses dTMP + ATP = dTDP + ADP. Its function is as follows. Phosphorylation of dTMP to form dTDP in both de novo and salvage pathways of dTTP synthesis. This Pseudomonas savastanoi pv. phaseolicola (strain 1448A / Race 6) (Pseudomonas syringae pv. phaseolicola (strain 1448A / Race 6)) protein is Thymidylate kinase.